A 30-amino-acid chain; its full sequence is Gamma-II crystallin (30 aa).

The Beta/gamma crystallin 'Greek key' domain occupies 1–30 (GKITFYEDRNFQGRCYECSTDCPDLSPYFS).

This sequence belongs to the beta/gamma-crystallin family. In terms of assembly, monomer.

In terms of biological role, crystallins are the dominant structural components of the vertebrate eye lens. This is Gamma-II crystallin from Rhizoprionodon acutus (Milk shark).